A 512-amino-acid chain; its full sequence is Cytochrome P450 82C3 (512 aa).

The chain crosses the membrane as a helical span at residues 1–21 (MDTSLFSLFVSILVFVFIALF). Cys451 is a binding site for heme.

It belongs to the cytochrome P450 family. Requires heme as cofactor.

The protein resides in the membrane. This chain is Cytochrome P450 82C3 (CYP82C3), found in Arabidopsis thaliana (Mouse-ear cress).